The primary structure comprises 393 residues: Protein phosphatase 2C homolog 4 (393 aa).

One can recognise a PPM-type phosphatase domain in the interval 33-368 (YNCVGSMQGY…DNMTAIIVVL (336 aa)). The Mn(2+) site is built by Asp-83, Gly-84, Asp-310, and Asp-359.

This sequence belongs to the PP2C family. The cofactor is Mg(2+). Requires Mn(2+) as cofactor.

The enzyme catalyses O-phospho-L-seryl-[protein] + H2O = L-seryl-[protein] + phosphate. It catalyses the reaction O-phospho-L-threonyl-[protein] + H2O = L-threonyl-[protein] + phosphate. This Saccharomyces cerevisiae (strain ATCC 204508 / S288c) (Baker's yeast) protein is Protein phosphatase 2C homolog 4 (PTC4).